The sequence spans 264 residues: Sulfur carrier protein FdhD (264 aa).

Cys-107 acts as the Cysteine persulfide intermediate in catalysis.

It belongs to the FdhD family.

It is found in the cytoplasm. In terms of biological role, required for formate dehydrogenase (FDH) activity. Acts as a sulfur carrier protein that transfers sulfur from IscS to the molybdenum cofactor prior to its insertion into FDH. The chain is Sulfur carrier protein FdhD from Staphylococcus haemolyticus (strain JCSC1435).